A 179-amino-acid polypeptide reads, in one-letter code: Large ribosomal subunit protein uL6 (179 aa).

The protein belongs to the universal ribosomal protein uL6 family. As to quaternary structure, part of the 50S ribosomal subunit.

Its function is as follows. This protein binds to the 23S rRNA, and is important in its secondary structure. It is located near the subunit interface in the base of the L7/L12 stalk, and near the tRNA binding site of the peptidyltransferase center. This Mycobacterium tuberculosis (strain ATCC 25618 / H37Rv) protein is Large ribosomal subunit protein uL6.